Here is a 404-residue protein sequence, read N- to C-terminus: Protrudin (404 aa).

The interval 1-20 (MQTSEREGCGPEVSPSTVPE) is disordered. At 1 to 66 (MQTSEREGCG…AGDGVRYLLR (66 aa)) the chain is on the cytoplasmic side. A sufficient for homooligomerization region spans residues 1–92 (MQTSEREGCG…LFLTLNEGAW (92 aa)). The tract at residues 1-205 (MQTSEREGCG…LYLLPLCWVL (205 aa)) is sufficient for localization to endoplasmic reticulum tubular network and for interactions with REEP1, REEP5, ATL1, ATL2, ATL3 and SPAST. Residues 51 to 64 (LEPLKDAGDGVRYL) form a necessary for interaction with RAB11A and function in neurite outgrowth region. Residues 67–87 (WQTPLCSLLTCLGLNVLFLTL) form a helical membrane-spanning segment. N88 is a topological domain (lumenal). Residues 89 to 109 (EGAWYSVGALMISVPALLGYL) traverse the membrane as a helical segment. Residues 110-187 (QEGCQARLSE…NPAVSSQFYG (78 aa)) are Cytoplasmic-facing. The segment at residues 188–208 (ALLGTVCMLYLLPLCWVLALL) is an intramembrane region (helical). The Cytoplasmic segment spans residues 209–404 (NSTLFLGNVE…CASCNQTLSK (196 aa)). Residues 234-286 (MNPKQEESAFESPPPSDAGGKGALVDCTPAPTPTEDLTPGSVEEAEEAEPDEE) are disordered. Residues 271–354 (TPGSVEEAEE…GCSATFSVLK (84 aa)) are necessary for interaction with KIF5A. Positions 276-286 (EEAEEAEPDEE) are enriched in acidic residues. A necessary for interaction with VAPA region spans residues 286–292 (EFKDAIE). The FYVE-type zinc finger occupies 337–403 (TNNYGSCTGC…VCASCNQTLS (67 aa)). Residues C343, C346, C359, C362, C367, C370, C395, and C398 each contribute to the Zn(2+) site.

Can form homooligomers (monomers, dimers and tetramers). Interacts with RAB11A (GDP-bound form); regulates RAB11A. Interacts with FKBP8; may negatively regulate ZFYVE27 phosphorylation. Interacts with VAPA (via MSP domain); may regulate ZFYVE27 retention in the endoplasmic reticulum and its function in cell projections formation. Interacts with VAPB (via MSP domain). Interacts with RAB11B (GDP-bound form), REEP1, REEP5, ATL1, ATL2, ATL3, SPAST, SURF4, KIF5A, KIF5B, KIF5C and RTN3. In terms of processing, phosphorylated. Phosphorylation is induced by NGF through the MAPK/ERK pathway and modulates interaction with RAB11A.

It is found in the recycling endosome membrane. Its subcellular location is the endoplasmic reticulum membrane. The protein localises to the cell projection. The protein resides in the growth cone membrane. Key regulator of RAB11-dependent vesicular trafficking during neurite extension through polarized membrane transport. Promotes axonal elongation and contributes to the establishment of neuronal cell polarity. Involved in nerve growth factor-induced neurite formation in VAPA-dependent manner. Contributes to both the formation and stabilization of the tubular ER network. Involved in ER morphogenesis by regulating the sheet-to-tubule balance and possibly the density of tubule interconnections. Acts as an adapter protein that facilitates the interaction of KIF5A with VAPA, VAPB, SURF4, RAB11A, RAB11B and RTN3 and the ZFYVE27-KIF5A complex contributes to the transport of these proteins in neurons. Can induce formation of neurite-like membrane protrusions in non-neuronal cells in a KIF5A/B-dependent manner. The chain is Protrudin (ZFYVE27) from Bos taurus (Bovine).